Consider the following 327-residue polypeptide: Undecaprenyl-phosphate 4-deoxy-4-formamido-L-arabinose transferase (327 aa).

The Cytoplasmic segment spans residues 1-235 (MFDAAPIKKV…TCLTTTPLRL (235 aa)). The helical transmembrane segment at 236 to 256 (LSLLGSVIAIGGFSLSVLLIV) threads the bilayer. At 257–269 (LRLALGPQWAAEG) the chain is on the periplasmic side. Residues 270–290 (VFMLFAVLFTFIGAQFIGMGL) form a helical membrane-spanning segment. Over 291-327 (LGEYIGRIYNDVRARPRYFVQQVIYPESTSFTEESHQ) the chain is Cytoplasmic.

It belongs to the glycosyltransferase 2 family.

It localises to the cell inner membrane. It catalyses the reaction UDP-4-deoxy-4-formamido-beta-L-arabinose + di-trans,octa-cis-undecaprenyl phosphate = 4-deoxy-4-formamido-alpha-L-arabinopyranosyl di-trans,octa-cis-undecaprenyl phosphate + UDP. It participates in glycolipid biosynthesis; 4-amino-4-deoxy-alpha-L-arabinose undecaprenyl phosphate biosynthesis; 4-amino-4-deoxy-alpha-L-arabinose undecaprenyl phosphate from UDP-4-deoxy-4-formamido-beta-L-arabinose and undecaprenyl phosphate: step 1/2. The protein operates within bacterial outer membrane biogenesis; lipopolysaccharide biosynthesis. Its function is as follows. Catalyzes the transfer of 4-deoxy-4-formamido-L-arabinose from UDP to undecaprenyl phosphate. The modified arabinose is attached to lipid A and is required for resistance to polymyxin and cationic antimicrobial peptides. This Salmonella newport (strain SL254) protein is Undecaprenyl-phosphate 4-deoxy-4-formamido-L-arabinose transferase.